The sequence spans 238 residues: Ribonuclease PH (238 aa).

Residues Arg-86 and 124–126 (GTR) contribute to the phosphate site.

Belongs to the RNase PH family. As to quaternary structure, homohexameric ring arranged as a trimer of dimers.

It carries out the reaction tRNA(n+1) + phosphate = tRNA(n) + a ribonucleoside 5'-diphosphate. Functionally, phosphorolytic 3'-5' exoribonuclease that plays an important role in tRNA 3'-end maturation. Removes nucleotide residues following the 3'-CCA terminus of tRNAs; can also add nucleotides to the ends of RNA molecules by using nucleoside diphosphates as substrates, but this may not be physiologically important. Probably plays a role in initiation of 16S rRNA degradation (leading to ribosome degradation) during starvation. This Chromobacterium violaceum (strain ATCC 12472 / DSM 30191 / JCM 1249 / CCUG 213 / NBRC 12614 / NCIMB 9131 / NCTC 9757 / MK) protein is Ribonuclease PH.